The chain runs to 22 residues: Mu-conotoxin SxIIIC (22 aa).

3 disulfide bridges follow: Cys-3-Cys-15, Cys-4-Cys-21, and Cys-10-Cys-22. Cys-22 bears the Cysteine amide mark.

It belongs to the conotoxin M superfamily. As to expression, expressed by the venom duct.

It localises to the secreted. Its function is as follows. Mu-conotoxins block voltage-gated sodium channels (Nav). This toxin potently inhibits hNav1.4/SCN4A (IC(50)=15.11 nM). It also displays lower activities on other human subtypes (Nav1.1/SCN1A; IC(50)=132 nM, Nav1.2/SCN2A; IC(50)=363.8, Nav1.3/SCN3A; IC(50)=89.4, Nav1.6/SCN3A; IC(50)=124.9, Nav1.7/SCN7A; IC(50)=152.2). At Nav1.7/SCN9A, it does not elicit change in channel voltage-dependence of fast inactivation or activation, suggesting it acts as a pore blocker. Interestingly, it blocks current inhibition in an irreversible manner (tested during 35 minutes). In Conus striolatus (Cone snail), this protein is Mu-conotoxin SxIIIC.